Reading from the N-terminus, the 1447-residue chain is Bud site selection protein 4 (1447 aa).

Residues 1–16 (MHDAESTVDSLLKEID) show a composition bias toward basic and acidic residues. Disordered regions lie at residues 1–38 (MHDAESTVDSLLKEIDNEMEQTKSNITQNGSEDTPHNW) and 57–76 (NTRSNATENSRGRSPSKMST). Serine 10 is modified (phosphoserine). 2 stretches are compositionally biased toward polar residues: residues 22-32 (TKSNITQNGSE) and 59-76 (RSNATENSRGRSPSKMST). Residues serine 78, serine 81, serine 91, serine 96, and serine 167 each carry the phosphoserine modification. Residues 272–316 (NLPSKLLNTSNNSHSDSRSPTASVEDLNISTNLPGADSSQNNPVT) are disordered. Residues 277 to 316 (LLNTSNNSHSDSRSPTASVEDLNISTNLPGADSSQNNPVT) are compositionally biased toward polar residues. At threonine 365 the chain carries Phosphothreonine. Serine 367 is modified (phosphoserine). The segment at 444–479 (HQESEHANEQPAIIPQKDSSEETFTELNNESEFQRN) is disordered. Serine 511 is subject to Phosphoserine. Residues 529–591 (KTSAEEHDLS…NEEPEHVPLL (63 aa)) form a disordered region. Over residues 538-548 (SSSCEDQSVSE) the composition is skewed to polar residues. A compositionally biased stretch (basic and acidic residues) spans 549-580 (ARNKDRIEEKEVETKDENIETEKDESEYHKVE). Serine 616 carries the post-translational modification Phosphoserine. Residues 648-664 (ANSQFSQQSSITTASTV) show a composition bias toward polar residues. The disordered stretch occupies residues 648–673 (ANSQFSQQSSITTASTVDSKKDNGST). Residues 768-879 (EHENIPLSTH…SLWESSYELK (112 aa)) form an interaction with IQG1 region. Residues serine 805 and serine 811 each carry the phosphoserine modification. Residues 1302–1413 (NIYKEGYLLQ…WYNKLQEVVE (112 aa)) form the PH domain.

As to quaternary structure, interacts with AXL1, AXL2, IQG1 and SEC3. Post-translationally, phosphorylated by CDC28.

It is found in the bud neck. Functionally, required for establishment of the axial budding pattern in haploid cells. Cooperates with other bud site selection proteins to recognize a spatial landmark during mitosis and they subsequently become a landmark for downstream polarity establishment factors that coordinate axial budding and cytokinesis. Involved in the septin organization at the bud neck. This Saccharomyces cerevisiae (strain ATCC 204508 / S288c) (Baker's yeast) protein is Bud site selection protein 4 (BUD4).